The chain runs to 298 residues: Aspartate carbamoyltransferase catalytic subunit (298 aa).

Residues Arg50 and Thr51 each coordinate carbamoyl phosphate. Lys79 lines the L-aspartate pocket. Carbamoyl phosphate-binding residues include Arg100, His128, and Gln131. Residues Arg160 and Arg221 each coordinate L-aspartate. Positions 260 and 261 each coordinate carbamoyl phosphate.

The protein belongs to the aspartate/ornithine carbamoyltransferase superfamily. ATCase family. In terms of assembly, heterooligomer of catalytic and regulatory chains.

It carries out the reaction carbamoyl phosphate + L-aspartate = N-carbamoyl-L-aspartate + phosphate + H(+). It participates in pyrimidine metabolism; UMP biosynthesis via de novo pathway; (S)-dihydroorotate from bicarbonate: step 2/3. Functionally, catalyzes the condensation of carbamoyl phosphate and aspartate to form carbamoyl aspartate and inorganic phosphate, the committed step in the de novo pyrimidine nucleotide biosynthesis pathway. The sequence is that of Aspartate carbamoyltransferase catalytic subunit from Methanospirillum hungatei JF-1 (strain ATCC 27890 / DSM 864 / NBRC 100397 / JF-1).